A 90-amino-acid chain; its full sequence is Probable Fe(2+)-trafficking protein (90 aa).

Belongs to the Fe(2+)-trafficking protein family.

Functionally, could be a mediator in iron transactions between iron acquisition and iron-requiring processes, such as synthesis and/or repair of Fe-S clusters in biosynthetic enzymes. The polypeptide is Probable Fe(2+)-trafficking protein (Pseudomonas aeruginosa (strain UCBPP-PA14)).